The chain runs to 805 residues: Na(+)/H(+) antiporter subunit A (805 aa).

Transmembrane regions (helical) follow at residues 4-22 (LHWATISPFLLAILIPFLY), 29-51 (HTGWFVLVLPLVLFIYFIQYLSI), 80-102 (SLLFALLITGIGTLVILYSIFYL), 109-128 (LNNFYVYLLMFMGAMLGVVL), 132-154 (LIVLYVFWELTSLASSLLISYWF), 167-189 (MLITVFGGFAMLGGFSLLYVMTG), 209-231 (FLPAMILVLLGAFTKSAQFPFHI), 244-266 (SAYLHSATMVKAGIYLVARLTPV), 271-293 (AEWFWLLTGFGVVTLLWGSTSAV), 300-322 (GILAFSTVSQLGLIMTLLGLGSA), 332-354 (PAFYSFAIMAAIFHLINHATFKG), 375-397 (LGGLMAIMPVTFTVSLIGLASMA), 431-453 (IIIVVLAWIASVFTFLYCLIMFF), 474-496 (IGMLISPVILGSLVIVFGFFPNI), 529-551 (GFNAELFMTMGVVAAGIILFLMM), 597-614 (YFAYMIVFMILLLGYTMF), 629-651 (IAPYIWVITIVFIVATLSIPFIN), 656-674 (AVVVVGVIGFLLALLFVVF), 679-701 (LALTQLLIETVTVLLLMLAFYHL), 714-736 (NVLNLIISIGVGFFITAIALSSL), and 778-795 (MLEVLVLGIAALGVIALI).

The protein belongs to the CPA3 antiporters (TC 2.A.63) subunit A family. As to quaternary structure, forms a heterooligomeric complex that consists of seven subunits: MrpA, MrpB, MrpC, MrpD, MrpE, MrpF and MrpG.

Its subcellular location is the cell membrane. In terms of biological role, mnh complex is a Na(+)Li(+)/H(+) antiporter involved in Na(+) and/or Li(+) excretion and Na(+) resistance. Na(+)/H(+) antiport consumes a transmembrane electrical potential, and is thus inferred to be electrogenic. Does not transport K(+), Ca(2+) or Mg(2+). This is Na(+)/H(+) antiporter subunit A (mrpA) from Alkalihalophilus pseudofirmus (strain ATCC BAA-2126 / JCM 17055 / OF4) (Bacillus pseudofirmus).